A 149-amino-acid chain; its full sequence is Transthyretin (149 aa).

Positions M1–A22 are cleaved as a signal peptide. C32 bears the Sulfocysteine mark. L-thyroxine is bound at residue K37. E64 carries the post-translational modification 4-carboxyglutamate. Residues E76 and S139 each contribute to the L-thyroxine site.

It belongs to the transthyretin family. As to quaternary structure, homotetramer. Dimer of dimers. In the homotetramer, subunits assemble around a central channel that can accommodate two ligand molecules. Interacts with RBP4. Sulfonation of the reactive cysteine Cys-32 enhances the stability of the native conformation of TTR, avoiding misassembly of the protein leading to amyloid formation. Detected in liver.

Its subcellular location is the secreted. Its function is as follows. Thyroid hormone-binding protein. Probably transports thyroxine from the bloodstream to the brain. The chain is Transthyretin (TTR) from Macropus giganteus (Eastern gray kangaroo).